Consider the following 861-residue polypeptide: MDESALLDLLECPVCLERLDASAKVLPCQHTFCKRCLLGIVSSRNELRCPECRTLVECGVDELPSNILLVRLLDGIKQRPRKAGVGGSAGNSTNVLRAQGSLTTNCGLNDAQNIHGGQQRIQARSPPVRGVPQLPCAKALYNYEGKEPGDLKFNKGDIIVLRRQVDENWYHGEINGIHGFFPTNFVQIIKPLPQPPPQCKALYDFEVKDKEADKDCLPFLKDDILTVIRRVDENWAEGMLGDKIGIFPISYVEFNSAAKQLIELDKPSGVDTGEGSSGTTHSSNSQKQADAKKNTKKRHSFTSLTMSNKSSQSVQNRHSMEISPPVLISSSNPTAAARISELTGLSCSAPSQVHISTTGLIVTPPPSSPVVSGPAFTFPPEVTYQAALGDLNPPLLPPPPLATPVITSTSSGAAAAVQRSISGPAEQVTHLRTSTRPSVFVAIYPYIPRKEDELELRKGEMFLVFERCQDGWFKGTSMHTSKIGVFPGNYVAPVTRALTTATPAKVAMATASSSNVVNLVTPTPPGAPCQKLQGNGAEFAKTVSTNGVPPAGIPGSHIQSSPQAKVLLHMSGQMTVNQARNAVRTAAAHSQDRPTAAVTPIQAQIPSASVLPQQAATSQQMPPPLSGPAAYINAAMNISRPSVPVASAASSSVSSAAFETECNWKSGSGLAACSFPENVSAPLNSAANKQDKDSKKEKKGLLKLLSGASTKRKPRSSPPHSPTQELEQTNSEAALEGAVGPDILPVNGNGRVASCTVDCDLVSASALVQDNRKPASLDTNVPIAPPPRQPCSSLGTVLNDSRPCERYRVVVSYPPQSEAELELKEGDIVFVHKKREDGWFKGTLQRNGKTGLFPGSFVENI.

An RING-type zinc finger spans residues 12 to 53 (CPVCLERLDASAKVLPCQHTFCKRCLLGIVSSRNELRCPECR). SH3 domains follow at residues 132–191 (PQLP…IIKP) and 194–257 (QPPP…FNSA). Positions 268–319 (SGVDTGEGSSGTTHSSNSQKQADAKKNTKKRHSFTSLTMSNKSSQSVQNRHS) are disordered. Over residues 273–285 (GEGSSGTTHSSNS) the composition is skewed to low complexity. Residues 301–317 (FTSLTMSNKSSQSVQNR) show a composition bias toward polar residues. One can recognise an SH3 3 domain in the interval 435 to 496 (TRPSVFVAIY…PGNYVAPVTR (62 aa)). The disordered stretch occupies residues 684 to 731 (NSAANKQDKDSKKEKKGLLKLLSGASTKRKPRSSPPHSPTQELEQTNS). Over residues 689-700 (KQDKDSKKEKKG) the composition is skewed to basic and acidic residues. The 60-residue stretch at 802-861 (RPCERYRVVVSYPPQSEAELELKEGDIVFVHKKREDGWFKGTLQRNGKTGLFPGSFVENI) folds into the SH3 4 domain.

This sequence belongs to the SH3RF family. Autoubiquitinated. Ubiquitinated by SH3RF2, leading to proteasome-mediated degradation.

It localises to the cytoplasm. The protein localises to the perinuclear region. It is found in the cell projection. Its subcellular location is the lamellipodium. The protein resides in the golgi apparatus. It localises to the trans-Golgi network. It carries out the reaction S-ubiquitinyl-[E2 ubiquitin-conjugating enzyme]-L-cysteine + [acceptor protein]-L-lysine = [E2 ubiquitin-conjugating enzyme]-L-cysteine + N(6)-ubiquitinyl-[acceptor protein]-L-lysine.. It participates in protein modification; protein ubiquitination. Its function is as follows. Has E3 ubiquitin-protein ligase activity. In the absence of an external substrate, it can catalyze self-ubiquitination. Acts as a scaffold protein that contributes to the effective activation of the JNK signaling pathway. In Xenopus tropicalis (Western clawed frog), this protein is E3 ubiquitin-protein ligase SH3RF1 (sh3rf1).